The sequence spans 186 residues: Adenine phosphoribosyltransferase (186 aa).

The protein belongs to the purine/pyrimidine phosphoribosyltransferase family. As to quaternary structure, homodimer.

The protein resides in the cytoplasm. It carries out the reaction AMP + diphosphate = 5-phospho-alpha-D-ribose 1-diphosphate + adenine. It participates in purine metabolism; AMP biosynthesis via salvage pathway; AMP from adenine: step 1/1. In terms of biological role, catalyzes a salvage reaction resulting in the formation of AMP, that is energically less costly than de novo synthesis. The sequence is that of Adenine phosphoribosyltransferase from Sulfurovum sp. (strain NBC37-1).